Consider the following 289-residue polypeptide: Digeranylgeranylglyceryl phosphate synthase (289 aa).

8 helical membrane-spanning segments follow: residues 18–38 (LMAG…LISG), 47–67 (AFPF…SGAG), 99–119 (FYFS…INSI), 120–140 (CGSI…TLKG), 163–183 (IFGF…ALAI), 218–238 (LAVL…FMSV), 243–263 (YIYL…QLLV), and 269–289 (KSSK…IAGV).

This sequence belongs to the UbiA prenyltransferase family. DGGGP synthase subfamily. Requires Mg(2+) as cofactor.

The protein localises to the cell membrane. The enzyme catalyses sn-3-O-(geranylgeranyl)glycerol 1-phosphate + (2E,6E,10E)-geranylgeranyl diphosphate = 2,3-bis-O-(geranylgeranyl)-sn-glycerol 1-phosphate + diphosphate. The protein operates within membrane lipid metabolism; glycerophospholipid metabolism. Functionally, prenyltransferase that catalyzes the transfer of the geranylgeranyl moiety of geranylgeranyl diphosphate (GGPP) to the C2 hydroxyl of (S)-3-O-geranylgeranylglyceryl phosphate (GGGP). This reaction is the second ether-bond-formation step in the biosynthesis of archaeal membrane lipids. This Methanosarcina mazei (strain ATCC BAA-159 / DSM 3647 / Goe1 / Go1 / JCM 11833 / OCM 88) (Methanosarcina frisia) protein is Digeranylgeranylglyceryl phosphate synthase.